The chain runs to 198 residues: UPF0314 protein Saro_1818 (198 aa).

The next 5 helical transmembrane spans lie at 13 to 33 (GGSL…LGMG), 62 to 82 (WYSF…HIVW), 96 to 116 (LALA…PIII), 153 to 173 (APVL…LWAI), and 177 to 197 (LALN…WQGG).

The protein belongs to the UPF0314 family.

The protein resides in the cell membrane. The chain is UPF0314 protein Saro_1818 from Novosphingobium aromaticivorans (strain ATCC 700278 / DSM 12444 / CCUG 56034 / CIP 105152 / NBRC 16084 / F199).